Reading from the N-terminus, the 291-residue chain is MNETLKCVVRQPSVLGECPVWSVREQVLYWADILAGRLHRLDPRDGSVSTLQLPEELGCFGLREQGGFIVALRSGIYLLDAHGQLGERLAENPTGAEHSRFNDGRVDPWGRFWAGTLWQPRDRNGGQLLRVDAEHRAQVMAGDVMVSNGLAFSPDRAWAYHSDTPNHVLYRYPLDEDGQPGTRQLLREFARGSGGRPDGAAFDSAGCYWSAQFDGGRVLRLSPDGQVLDEIQLPTRWPTMVAFGGEDLRTLYITSSRENRSAEELADWPLSGCVFATRVNVPGCAEPLFAG.

3 residues coordinate a divalent metal cation: glutamate 17, asparagine 148, and aspartate 198. Aspartate 198 functions as the Proton donor/acceptor in the catalytic mechanism.

Belongs to the SMP-30/CGR1 family. A divalent metal cation serves as cofactor.

The catalysed reaction is 6-deoxy-6-sulfo-D-glucono-1,5-lactone + H2O = 6-deoxy-6-sulfo-D-gluconate + H(+). Functionally, catalyzes the hydrolysis of 6-deoxy-6-sulfo-D-glucono-1,5-lactone to form 6-deoxy-6-sulfo-D-gluconate. Is involved in a degradation pathway of sulfoquinovose (SQ) that allows P.putida SQ1 to use SQ as the sole carbon and energy source for growth. The protein is 6-deoxy-6-sulfogluconolactonase of Pseudomonas putida (Arthrobacter siderocapsulatus).